The following is a 341-amino-acid chain: Ketol-acid reductoisomerase (NADP(+)) (341 aa).

One can recognise a KARI N-terminal Rossmann domain in the interval 1-182 (MTELFYDDDA…GGTRAGVIKT (182 aa)). Residues 25-28 (YGSQ), Ser-51, Ser-53, and 83-86 (DQVQ) contribute to the NADP(+) site. Residue His-108 is part of the active site. Position 134 (Gly-134) interacts with NADP(+). In terms of domain architecture, KARI C-terminal knotted spans 183–328 (TFTEETETDL…RELRKLFSWI (146 aa)). Mg(2+) is bound by residues Asp-191, Glu-195, Glu-227, and Glu-231. Substrate is bound at residue Ser-252.

The protein belongs to the ketol-acid reductoisomerase family. Requires Mg(2+) as cofactor.

It catalyses the reaction (2R)-2,3-dihydroxy-3-methylbutanoate + NADP(+) = (2S)-2-acetolactate + NADPH + H(+). The catalysed reaction is (2R,3R)-2,3-dihydroxy-3-methylpentanoate + NADP(+) = (S)-2-ethyl-2-hydroxy-3-oxobutanoate + NADPH + H(+). It functions in the pathway amino-acid biosynthesis; L-isoleucine biosynthesis; L-isoleucine from 2-oxobutanoate: step 2/4. Its pathway is amino-acid biosynthesis; L-valine biosynthesis; L-valine from pyruvate: step 2/4. Its function is as follows. Involved in the biosynthesis of branched-chain amino acids (BCAA). Catalyzes an alkyl-migration followed by a ketol-acid reduction of (S)-2-acetolactate (S2AL) to yield (R)-2,3-dihydroxy-isovalerate. In the isomerase reaction, S2AL is rearranged via a Mg-dependent methyl migration to produce 3-hydroxy-3-methyl-2-ketobutyrate (HMKB). In the reductase reaction, this 2-ketoacid undergoes a metal-dependent reduction by NADPH to yield (R)-2,3-dihydroxy-isovalerate. This is Ketol-acid reductoisomerase (NADP(+)) from Renibacterium salmoninarum (strain ATCC 33209 / DSM 20767 / JCM 11484 / NBRC 15589 / NCIMB 2235).